Consider the following 179-residue polypeptide: Dual-action ribosomal maturation protein DarP (179 aa).

It belongs to the DarP family.

The protein resides in the cytoplasm. Functionally, member of a network of 50S ribosomal subunit biogenesis factors which assembles along the 30S-50S interface, preventing incorrect 23S rRNA structures from forming. Promotes peptidyl transferase center (PTC) maturation. This chain is Dual-action ribosomal maturation protein DarP, found in Erwinia tasmaniensis (strain DSM 17950 / CFBP 7177 / CIP 109463 / NCPPB 4357 / Et1/99).